Here is a 516-residue protein sequence, read N- to C-terminus: Multicopper oxidase CueO (516 aa).

Residues 1–28 constitute a signal peptide (tat-type signal); the sequence is MQRRDFLKYSVALGVASALPLWSRAVFA. Plastocyanin-like domains lie at 55–165 and 227–292; these read GQST…IEDD and PRGW…DNKP. Residues His101, His103, His141, and His143 each contribute to the Cu cation site. The methionine-rich region stretch occupies residues 355-400; that stretch reads MDPMLDMMGMQMLMEKYGDQAMAGMDHSQMMGHMGHGNMNHMNHGG. The Plastocyanin-like 3 domain maps to 402-516; that stretch reads FDFHHANKIN…DTGMMLGFTV (115 aa). Positions 443, 446, 448, 499, 500, 501, and 505 each coordinate Cu cation.

It belongs to the multicopper oxidase family. In terms of assembly, monomer. Requires Cu cation as cofactor. In terms of processing, exported by the Tat system. The position of the signal peptide cleavage has been experimentally proven.

It localises to the periplasm. It carries out the reaction 4 Cu(+) + O2 + 4 H(+) = 4 Cu(2+) + 2 H2O. With respect to regulation, ferroxidase and phenoloxidase activities are enhanced considerably in the presence of excess copper ions. A labile regulatory copper ion near the T1 copper site is important for the copper associated activation of enzyme activity. Ag(+) acts as a potent inhibitor of oxidase activity by binding at Cu(+) binding sites, blocking Cu(+) substrate binding and oxidation. pPD oxidase activity is strongly inhibited by sodium azide, an inhibitor of the electron transfer. Multicopper oxidase involved in copper homeostasis and copper tolerance under aerobic conditions. Is responsible for the oxidation of Cu(+) to the less harmful Cu(2+) in the periplasm, thereby preventing Cu(+) from entering the cytoplasm. Probably primarily functions as a cuprous oxidase in vivo. Functionally, in vitro, in the presence of excess copper ions, exhibits ferroxidase and phenoloxidase activities. Fe(2+) is an excellent substrate in the presence of excess Cu(2+), but is inactive in the absence of Cu(2+). Oxidizes the phenolate iron siderophores enterobactin, 2,3-dihydroxybenzoate (2,3-DHB) and 3-hydroxyanthranilate (3-HAA). Oxidation and thus inactivation of enterobactin could protect cells from the interaction of enterobactin with copper and play a central role as an interface between copper detoxification and iron homeostasis. Also oxidizes a variety of phenolic model substrates, including 2,2'-azinobis(3-ethylbenzthiazolinesulfonic acid) (ABTS), p-phenylenediamine (pPD), 2,6-dimethoxyphenol (2,6-DMP) and 3,4-dihydroxybenzoic acid (3,4-DHB). The protein is Multicopper oxidase CueO of Escherichia coli (strain K12).